The chain runs to 870 residues: MVSDFEPAGDQPTAIKDLVEGVDNNDRTQVLLGVTGSGKTFTMAKVIEETQRPALILAPNKTLAAQLYSEFKKFFPDNAVEYFVSYYDYYQPEAYVPRTDTFIEKESSINEQIDRMRHSATRSLLERDDVIIVASVSCIYGIGSVETYTAMTFQMQIGDRLDQRALLADLVAQQYKRQDINFVRGSFRVRGDTIEIFPAHLEDRAWRISMFGDEIEQITEFDPLTGQKTGELKSVKIYANSHYVTPRPTLNQAIKSIKEELKQRLVELERAGRLLEAQRLEQRTRFDLEMLEATGSCAGIENYSRYLTGRQPGDPPPTLFEYIPDNALVFIDESHVTVPQIGGMYRGDFRRKATLAEYGFRLPSCMDNRPLRFEEWDAMRPLSVAVSATPGGWEMEQSGGVFAEQVIRPTGLIDPPVEVRPAKSQVDDVVGEIRETTKAGYRTLVTVLTKRMAEDLTEYLHEQGVRVRYMHSDIDTLERIEILRDLRLGAFDVLVGINLLREGLDIPECGFVAILDADKEGFLRSETSLIQTIGRAARNVDGKVILYADQVTGSMERAMAETNRRREKQMEWNAANGITPESVKSRISDILDSVYEKDHVRADISQFTDSAGAMMGNNLKAHLDAMEKQMRDAAANLDFEKAARIRDEIKRLREMELSISEDPLAKYADMESPVSGREKGKHNKGVAKHRTAEEQERFRKLDEARAAEEAARAARPNLFRKPALDEMGADGAVPAKKPLFAKPSIDDMGPGTDMPTPAGAVSRSLFKKQSASEAHGSDFGIPGEPVRPLFKKNSLDEMTVRRTEKPVEGKVPAKPQPISHPVGAGRTDVKDRDDSAKPIVRQRAGIGSYEDPGDARREKRRPGKTGRPGK.

The Helicase ATP-binding domain maps to 20–410 (EGVDNNDRTQ…VFAEQVIRPT (391 aa)). 33–40 (GVTGSGKT) provides a ligand contact to ATP. The Beta-hairpin signature appears at 86–109 (YYDYYQPEAYVPRTDTFIEKESSI). Residues 425 to 591 (QVDDVVGEIR…SVKSRISDIL (167 aa)) form the Helicase C-terminal domain. Positions 620 to 655 (KAHLDAMEKQMRDAAANLDFEKAARIRDEIKRLREM) constitute a UVR domain. Disordered regions lie at residues 671–698 (ESPV…QERF) and 741–870 (AKPS…RPGK). The span at 679–689 (KGKHNKGVAKH) shows a compositional bias: basic residues. Basic and acidic residues-rich tracts occupy residues 793–808 (NSLD…KPVE) and 827–836 (TDVKDRDDSA). The span at 858 to 870 (EKRRPGKTGRPGK) shows a compositional bias: basic residues.

Belongs to the UvrB family. Forms a heterotetramer with UvrA during the search for lesions. Interacts with UvrC in an incision complex.

Its subcellular location is the cytoplasm. The UvrABC repair system catalyzes the recognition and processing of DNA lesions. A damage recognition complex composed of 2 UvrA and 2 UvrB subunits scans DNA for abnormalities. Upon binding of the UvrA(2)B(2) complex to a putative damaged site, the DNA wraps around one UvrB monomer. DNA wrap is dependent on ATP binding by UvrB and probably causes local melting of the DNA helix, facilitating insertion of UvrB beta-hairpin between the DNA strands. Then UvrB probes one DNA strand for the presence of a lesion. If a lesion is found the UvrA subunits dissociate and the UvrB-DNA preincision complex is formed. This complex is subsequently bound by UvrC and the second UvrB is released. If no lesion is found, the DNA wraps around the other UvrB subunit that will check the other stand for damage. In Mesorhizobium japonicum (strain LMG 29417 / CECT 9101 / MAFF 303099) (Mesorhizobium loti (strain MAFF 303099)), this protein is UvrABC system protein B.